A 77-amino-acid chain; its full sequence is Immune protein Tis1 (77 aa).

Functionally, immunity protein that plays a role in preventing early activation of toxin Tas1. The sequence is that of Immune protein Tis1 (tis1) from Pseudomonas aeruginosa (strain UCBPP-PA14).